The sequence spans 489 residues: MASEQPVEAAPTGGSLADRITKPDESNTSETPAPIGDQTDGAPAQLGGSDLHEPEYNVEVKLSDLQADPNNPLYSVKNFEDLGLDPRILKGLSSMNFRKPSKIQERALPLLLNNPPKNLVGQSQSGTGKTAAFVLNALSRVDLSTEQMQKTPQALILAPTRELARQILGVVQVMGQFVDGLIIGAAVPTDRDSRPKRLECSIVVGTPGTVGDMIKRRTFIPNKLKVLVLDEADNMLDQQGLGDQCIRVKALLPRDIQVVLFSATFPEHVHQYASKFAPNANEITLQHEELTVEGIKQLYLDCADGEDKYRTLVQLYGLLTVGSSIIFVQTRAAAQEIERRMTAEGHTVVSLTGERDPSVRDAIIDQFRRGEAKVLIATNVLARGIDVSTVSMVINYDIPELHQPNVPGRQADFQTYLHRIGRTGRFGRVGVSISFVSNREEWEMLNQIQTYFNCEIQRVDTKDWDEVEDIIKKTIKNSRANPKFAGGKD.

The interval 1 to 51 is disordered; the sequence is MASEQPVEAAPTGGSLADRITKPDESNTSETPAPIGDQTDGAPAQLGGSDL. A Q motif motif is present at residues 77–105; sequence KNFEDLGLDPRILKGLSSMNFRKPSKIQE. The Helicase ATP-binding domain maps to 110–283; the sequence is LLLNNPPKNL…SKFAPNANEI (174 aa). 123–130 provides a ligand contact to ATP; the sequence is SQSGTGKT. The DEAD box motif lies at 230-233; it reads DEAD. One can recognise a Helicase C-terminal domain in the interval 311-467; that stretch reads TLVQLYGLLT…RVDTKDWDEV (157 aa).

The protein belongs to the DEAD box helicase family. DDX19/DBP5 subfamily. Associates with the nuclear pore complex.

The protein localises to the cytoplasm. It is found in the nucleus. Its subcellular location is the nuclear pore complex. The protein resides in the nucleus membrane. The enzyme catalyses ATP + H2O = ADP + phosphate + H(+). Its function is as follows. ATP-dependent RNA helicase associated with the nuclear pore complex and essential for mRNA export from the nucleus. May participate in a terminal step of mRNA export through the removal of proteins that accompany mRNA through the nucleopore complex. May also be involved in early transcription. The sequence is that of ATP-dependent RNA helicase dbp5 (dbp5) from Aspergillus fumigatus (strain ATCC MYA-4609 / CBS 101355 / FGSC A1100 / Af293) (Neosartorya fumigata).